The primary structure comprises 278 residues: Inner membrane mitoribosome receptor MBA1, mitochondrial (278 aa).

The N-terminal 33 residues, M1–L33, are a transit peptide targeting the mitochondrion.

As to quaternary structure, interacts with OXA1 and MDM38. Binds to mitoribosomes in order to recruit them to the mitochondrial inner membrane.

The protein localises to the mitochondrion inner membrane. Functionally, mitochondrial inner membrane-associated mitoribosome receptor that spatially aligns the mitoribosome exit tunnel with the membrane insertion machinery and allows cotranslational protein membrane insertion. The polypeptide is Inner membrane mitoribosome receptor MBA1, mitochondrial (Saccharomyces cerevisiae (strain ATCC 204508 / S288c) (Baker's yeast)).